The sequence spans 430 residues: Adenylosuccinate synthetase (430 aa).

Residues 12–18 and 40–42 contribute to the GTP site; these read GDEGKGK and GHT. D13 acts as the Proton acceptor in catalysis. Residues D13 and G40 each coordinate Mg(2+). IMP-binding positions include 13–16, 38–41, T128, R142, Q223, T238, and R302; these read DEGK and NAGH. H41 (proton donor) is an active-site residue. Residue 298 to 304 participates in substrate binding; sequence TTTGRPR. Residues R304, 330-332, and 412-414 contribute to the GTP site; these read SID and SVG.

Belongs to the adenylosuccinate synthetase family. In terms of assembly, homodimer. It depends on Mg(2+) as a cofactor.

It localises to the cytoplasm. The catalysed reaction is IMP + L-aspartate + GTP = N(6)-(1,2-dicarboxyethyl)-AMP + GDP + phosphate + 2 H(+). Its pathway is purine metabolism; AMP biosynthesis via de novo pathway; AMP from IMP: step 1/2. In terms of biological role, plays an important role in the de novo pathway of purine nucleotide biosynthesis. Catalyzes the first committed step in the biosynthesis of AMP from IMP. The chain is Adenylosuccinate synthetase from Streptococcus agalactiae serotype Ia (strain ATCC 27591 / A909 / CDC SS700).